A 317-amino-acid chain; its full sequence is Type II methyltransferase M.MgeORF184P (317 aa).

Belongs to the N(4)/N(6)-methyltransferase family.

It carries out the reaction a 2'-deoxyadenosine in DNA + S-adenosyl-L-methionine = an N(6)-methyl-2'-deoxyadenosine in DNA + S-adenosyl-L-homocysteine + H(+). Probably recognizes the double-stranded sequence 5'-CTAT-3' and methylates A-3 on only one strand; as the bacterial DNA is methylated on this sequence and this is the only type II methylase in the genome, it is probably responsible for all of the methylation on this site in the genome. The chain is Type II methyltransferase M.MgeORF184P from Mycoplasma genitalium (strain ATCC 33530 / DSM 19775 / NCTC 10195 / G37) (Mycoplasmoides genitalium).